Consider the following 493-residue polypeptide: Probable cytosol aminopeptidase (493 aa).

Mn(2+)-binding residues include lysine 257 and aspartate 262. Residue lysine 269 is part of the active site. The Mn(2+) site is built by aspartate 281, aspartate 341, and glutamate 343. Arginine 345 is an active-site residue.

It belongs to the peptidase M17 family. It depends on Mn(2+) as a cofactor.

It is found in the cytoplasm. It catalyses the reaction Release of an N-terminal amino acid, Xaa-|-Yaa-, in which Xaa is preferably Leu, but may be other amino acids including Pro although not Arg or Lys, and Yaa may be Pro. Amino acid amides and methyl esters are also readily hydrolyzed, but rates on arylamides are exceedingly low.. It carries out the reaction Release of an N-terminal amino acid, preferentially leucine, but not glutamic or aspartic acids.. Its function is as follows. Presumably involved in the processing and regular turnover of intracellular proteins. Catalyzes the removal of unsubstituted N-terminal amino acids from various peptides. In Synechococcus sp. (strain WH7803), this protein is Probable cytosol aminopeptidase.